The chain runs to 98 residues: Aspartyl/glutamyl-tRNA(Asn/Gln) amidotransferase subunit C (98 aa).

The disordered stretch occupies residues 70-98 (PSLTPEQALSGAPAQEQQRFKVPQILGED).

Belongs to the GatC family. Heterotrimer of A, B and C subunits.

The catalysed reaction is L-glutamyl-tRNA(Gln) + L-glutamine + ATP + H2O = L-glutaminyl-tRNA(Gln) + L-glutamate + ADP + phosphate + H(+). It catalyses the reaction L-aspartyl-tRNA(Asn) + L-glutamine + ATP + H2O = L-asparaginyl-tRNA(Asn) + L-glutamate + ADP + phosphate + 2 H(+). Functionally, allows the formation of correctly charged Asn-tRNA(Asn) or Gln-tRNA(Gln) through the transamidation of misacylated Asp-tRNA(Asn) or Glu-tRNA(Gln) in organisms which lack either or both of asparaginyl-tRNA or glutaminyl-tRNA synthetases. The reaction takes place in the presence of glutamine and ATP through an activated phospho-Asp-tRNA(Asn) or phospho-Glu-tRNA(Gln). The polypeptide is Aspartyl/glutamyl-tRNA(Asn/Gln) amidotransferase subunit C (Streptomyces avermitilis (strain ATCC 31267 / DSM 46492 / JCM 5070 / NBRC 14893 / NCIMB 12804 / NRRL 8165 / MA-4680)).